A 260-amino-acid chain; its full sequence is UPF0246 protein Mmwyl1_3597 (260 aa).

This sequence belongs to the UPF0246 family.

The protein is UPF0246 protein Mmwyl1_3597 of Marinomonas sp. (strain MWYL1).